The following is a 442-amino-acid chain: UBX domain-containing protein 6 (442 aa).

The interval 1–10 (MKKFFQEIKA) is mediates interaction with LMAN1. Residues 13 to 111 (KFKSAGPGQK…TNSVPEPKEE (99 aa)) are disordered. The residue at position 36 (Ser-36) is a Phosphoserine. The tract at residues 51–63 (EAQMAAAAALARL) is VCP/p97-interacting motif (VIM). Over residues 52 to 61 (AQMAAAAALA) the composition is skewed to low complexity. A compositionally biased stretch (polar residues) spans 90–105 (EATSSNNPGAPGTNSV). The 70-residue stretch at 175–244 (VDTIAKYLDN…GQEEFYVLGE (70 aa)) folds into the PUB domain. Residues 332–408 (RKYTYALVRV…GLVPSALLTF (77 aa)) enclose the UBX domain.

As to quaternary structure, interacts with VCP through the PUB domain (via C-terminus) and VIM motif (via N-terminus); the interaction is direct. Forms a ternary complex with CAV1 and VCP. Interacts with SYVN1. Interacts with HERPUD1. Interacts with VCPKMT. May interact with DERL1. Interacts with PLAA, VCP and YOD1; may form a complex involved in macroautophagy. Interacts with LMAN1. As to expression, widely expressed (at protein level). Highest expression in brain (at protein level).

Its subcellular location is the cytoplasm. It is found in the cytosol. The protein resides in the membrane. It localises to the nucleus. The protein localises to the cytoskeleton. Its subcellular location is the microtubule organizing center. It is found in the centrosome. The protein resides in the early endosome membrane. It localises to the late endosome membrane. The protein localises to the lysosome membrane. Functionally, may negatively regulate the ATPase activity of VCP, an ATP-driven segregase that associates with different cofactors to control a wide variety of cellular processes. As a cofactor of VCP, it may play a role in the transport of CAV1 to lysosomes for degradation. It may also play a role in endoplasmic reticulum-associated degradation (ERAD) of misfolded proteins. Together with VCP and other cofactors, it may play a role in macroautophagy, regulating for instance the clearance of damaged lysosomes. The polypeptide is UBX domain-containing protein 6 (Mus musculus (Mouse)).